Consider the following 351-residue polypeptide: sn-glycerol-3-phosphate import ATP-binding protein UgpC (351 aa).

One can recognise an ABC transporter domain in the interval 4-234 (ITLKDLVKSY…PATLFVAGFI (231 aa)). 36–43 (GPSGCGKS) serves as a coordination point for ATP.

It belongs to the ABC transporter superfamily. sn-glycerol-3-phosphate importer (TC 3.A.1.1.3) family. In terms of assembly, the complex is composed of two ATP-binding proteins (UgpC), two transmembrane proteins (UgpA and UgpE) and a solute-binding protein (UgpB).

Its subcellular location is the cell inner membrane. It catalyses the reaction sn-glycerol 3-phosphate(out) + ATP + H2O = sn-glycerol 3-phosphate(in) + ADP + phosphate + H(+). Functionally, part of the ABC transporter complex UgpBAEC involved in sn-glycerol-3-phosphate (G3P) import. Responsible for energy coupling to the transport system. In Ruegeria sp. (strain TM1040) (Silicibacter sp.), this protein is sn-glycerol-3-phosphate import ATP-binding protein UgpC.